Reading from the N-terminus, the 138-residue chain is ATP synthase epsilon chain (138 aa).

The protein belongs to the ATPase epsilon chain family. In terms of assembly, F-type ATPases have 2 components, CF(1) - the catalytic core - and CF(0) - the membrane proton channel. CF(1) has five subunits: alpha(3), beta(3), gamma(1), delta(1), epsilon(1). CF(0) has three main subunits: a, b and c.

Its subcellular location is the cell membrane. Produces ATP from ADP in the presence of a proton gradient across the membrane. In Buchnera aphidicola subsp. Acyrthosiphon pisum (strain APS) (Acyrthosiphon pisum symbiotic bacterium), this protein is ATP synthase epsilon chain (atpC).